Consider the following 364-residue polypeptide: Selenide, water dikinase (364 aa).

Sec-25 is an active-site residue. Residue Sec-25 is a non-standard amino acid, selenocysteine. Residues Lys-28, 46 to 48 (GYD), Asp-66, Asp-89, and 141 to 143 (GQT) each bind ATP. Asp-48 contacts Mg(2+). Residue Asp-89 participates in Mg(2+) binding. Mg(2+) is bound at residue Asp-244.

It belongs to the selenophosphate synthase 1 family. Class II subfamily. As to quaternary structure, homodimer. It depends on Mg(2+) as a cofactor.

The enzyme catalyses hydrogenselenide + ATP + H2O = selenophosphate + AMP + phosphate + 2 H(+). Its function is as follows. Synthesizes selenophosphate from selenide and ATP. This chain is Selenide, water dikinase (selD), found in Dictyostelium discoideum (Social amoeba).